Here is a 127-residue protein sequence, read N- to C-terminus: Photosystem II reaction center Psb28 protein (127 aa).

The disordered stretch occupies residues 108–127 (LGYSQSQDSDQTEGADNQQA). The segment covering 109–127 (GYSQSQDSDQTEGADNQQA) has biased composition (polar residues).

It belongs to the Psb28 family. As to quaternary structure, part of the photosystem II complex.

The protein resides in the cellular thylakoid membrane. This chain is Photosystem II reaction center Psb28 protein, found in Synechococcus sp. (strain CC9605).